The chain runs to 58 residues: UPF0391 membrane protein VP0082 (58 aa).

Transmembrane regions (helical) follow at residues 4–24 and 30–50; these read WMFI…SGIA and VAQV…VFVI.

Belongs to the UPF0391 family.

Its subcellular location is the cell membrane. The chain is UPF0391 membrane protein VP0082 from Vibrio parahaemolyticus serotype O3:K6 (strain RIMD 2210633).